A 137-amino-acid chain; its full sequence is Large ribosomal subunit protein uL16 (137 aa).

It belongs to the universal ribosomal protein uL16 family. In terms of assembly, part of the 50S ribosomal subunit.

Binds 23S rRNA and is also seen to make contacts with the A and possibly P site tRNAs. This chain is Large ribosomal subunit protein uL16, found in Bartonella henselae (strain ATCC 49882 / DSM 28221 / CCUG 30454 / Houston 1) (Rochalimaea henselae).